We begin with the raw amino-acid sequence, 101 residues long: Small ribosomal subunit protein bS18c (101 aa).

This sequence belongs to the bacterial ribosomal protein bS18 family. As to quaternary structure, part of the 30S ribosomal subunit.

It is found in the plastid. It localises to the chloroplast. This Coffea arabica (Arabian coffee) protein is Small ribosomal subunit protein bS18c.